Here is a 579-residue protein sequence, read N- to C-terminus: MAENESNVVVDHGQSRLSDLWTKEDYWAIWLGFVILIAGMWLFLANPSPEFAQKVDKANAVMAAEAERAPFKTLAYYKAQDDKGKLKAMDSATGKSIGAFLKAPGGWTSNPLESFVLSKEAAEERNAAAKSKFEAAKAKSDAAFAAAQVAEAAAAEAGFADTALNDAAQGKIAEWRADLAKMKSAEKKVKTKAFNISTSLPMLMVVMGLFFAIGMKFMGHDVPKFLVGFIGVFVVAVIAQMMGHQSTMKYWGIGTEAWAIIIGMLIANTVGTPNFIKPALQVEYYIKTGLVLLGAEVLFDKIIAIGIPGIFVAWVVTPIVLICTFIFGQKILKMPSKTLNMVISADMSVCGTSAAIATAAACRAKKEELTLSIGLSLVFTAIMMIVMPAFIKSVGMPQILGGAWMGGTIDATGAVAAAGAFLGEKALYVAATIKMIQNVLIGVVAFGVAVYWCARVECTSGRSVGWIEIWNRFPKFVLGFLTASIIFSIISGSLGSDMSQIMVNQGVLKGLSSPLRGWFFCLAFTAIGLATNFRELAHYFKGGKPLILYVCGQSFNLVLTLTMAYIMFYIVFPEITAKI.

10 helical membrane passes run 26–45, 193–215, 225–243, 250–272, 305–327, 369–391, 430–452, 473–495, 515–533, and 546–568; these read YWAI…LFLA, AFNI…AIGM, FLVG…QMMG, YWGI…TVGT, IGIP…TFIF, LTLS…PAFI, AATI…AVYW, FPKF…GSLG, LRGW…ATNF, and LILY…YIMF.

Belongs to the UPF0324 family.

It is found in the cell membrane. This chain is UPF0324 membrane protein DVU_0943, found in Nitratidesulfovibrio vulgaris (strain ATCC 29579 / DSM 644 / CCUG 34227 / NCIMB 8303 / VKM B-1760 / Hildenborough) (Desulfovibrio vulgaris).